We begin with the raw amino-acid sequence, 404 residues long: Sorting nexin-5 (404 aa).

An N-acetylalanine modification is found at Ala-2. Residues 25–172 enclose the PX domain; the sequence is LNVDPSLQID…HVFLEYDQDL (148 aa). A 1,2-diacyl-sn-glycero-3-phospho-(1D-myo-inositol-4,5-bisphosphate) is bound by residues 40–46, 99–105, and 113–116; these read SERDKVK, FDGPREK, and EGSM. The segment at 169–261 is interaction with DOCK1; sequence DQDLSVRRKN…HSLALEEPTV (93 aa). The tract at residues 183–200 is membrane-binding amphipathic helix; it reads FGGFFKSVVKSADEVLFS. At Ser-193 the chain carries Phosphoserine. The BAR domain maps to 202–404; sequence VKEVDDFFEQ…QSCIDLFKNN (203 aa). Lys-275 is subject to N6-acetyllysine.

The protein belongs to the sorting nexin family. In terms of assembly, forms heterodimers with BAR domain-containing sorting nexins SNX1 and SNX2; does not homodimerize. The heterodimers are proposed to self-assemble into helical arrays on the membrane to stabilize and expand local membrane curvature underlying endosomal tubule formation. Thought to be a component of the originally described retromer complex (also called SNX-BAR retromer) which is a pentamer containing the heterotrimeric retromer cargo-selective complex (CSC), also described as vacuolar protein sorting subcomplex (VPS), and a heterodimeric membrane-deforming subcomplex formed between SNX1 or SNX2 and SNX5 or SNX6 (also called SNX-BAR subcomplex); the respective CSC and SNX-BAR subcomplexes associate with low affinity. Interacts with SNX1, SNX2, VPS26A, VPS29, VPS35, DCTN1, DOCK1, MIB1, PIP5K1C. Interacts with HGS; increased by PIP5K1C kinase activity and by PtdIns(3P) and/or PtdIns(3,4)P2.

It localises to the endosome. The protein localises to the early endosome. It is found in the early endosome membrane. Its subcellular location is the cell membrane. The protein resides in the cytoplasmic vesicle membrane. It localises to the cytoplasm. The protein localises to the cell projection. It is found in the phagocytic cup. Its subcellular location is the ruffle. In terms of biological role, involved in several stages of intracellular trafficking. Interacts with membranes containing phosphatidylinositol lipids. Acts in part as component of the retromer membrane-deforming SNX-BAR subcomplex. The SNX-BAR retromer mediates retrograde transport of cargo proteins from endosomes to the trans-Golgi network (TGN) and is involved in endosome-to-plasma membrane transport for cargo protein recycling. The SNX-BAR subcomplex functions to deform the donor membrane into a tubular profile called endosome-to-TGN transport carrier (ETC). Does not have in vitro vesicle-to-membrane remodeling activity. Involved in retrograde transport of lysosomal enzyme receptor IGF2R. May function as link between endosomal transport vesicles and dynactin. Plays a role in the internalization of EGFR after EGF stimulation. Involved in EGFR endosomal sorting and degradation; the function involves PIP5K1C and is retromer-independent. Together with PIP5K1C facilitates HGS interaction with ubiquitinated EGFR, which initiates EGFR sorting to intraluminal vesicles (ILVs) of the multivesicular body for subsequent lysosomal degradation. Involved in E-cadherin sorting and degradation; inhibits PIP5K1C-mediated E-cadherin degradation. Plays a role in macropinocytosis. This Rattus norvegicus (Rat) protein is Sorting nexin-5 (Snx5).